Reading from the N-terminus, the 173-residue chain is 6,7-dimethyl-8-ribityllumazine synthase (173 aa).

Residues Phe-24, 58 to 60, and 82 to 84 each bind 5-amino-6-(D-ribitylamino)uracil; these read ALE and AVI. 87–88 contacts (2S)-2-hydroxy-3-oxobutyl phosphate; the sequence is ET. The Proton donor role is filled by His-90. Asn-115 lines the 5-amino-6-(D-ribitylamino)uracil pocket. Arg-129 lines the (2S)-2-hydroxy-3-oxobutyl phosphate pocket. Residues 150 to 173 are disordered; that stretch reads TLDQLSDDEEDEEDEDDEDEEERA. The span at 154 to 173 shows a compositional bias: acidic residues; sequence LSDDEEDEEDEDDEDEEERA.

The protein belongs to the DMRL synthase family.

The enzyme catalyses (2S)-2-hydroxy-3-oxobutyl phosphate + 5-amino-6-(D-ribitylamino)uracil = 6,7-dimethyl-8-(1-D-ribityl)lumazine + phosphate + 2 H2O + H(+). It participates in cofactor biosynthesis; riboflavin biosynthesis; riboflavin from 2-hydroxy-3-oxobutyl phosphate and 5-amino-6-(D-ribitylamino)uracil: step 1/2. Catalyzes the formation of 6,7-dimethyl-8-ribityllumazine by condensation of 5-amino-6-(D-ribitylamino)uracil with 3,4-dihydroxy-2-butanone 4-phosphate. This is the penultimate step in the biosynthesis of riboflavin. The chain is 6,7-dimethyl-8-ribityllumazine synthase from Burkholderia mallei (strain NCTC 10247).